A 355-amino-acid polypeptide reads, in one-letter code: MGCTVSAEDKAAAERSKMIDKNLREDGEKAAREVKLLLLGAGESGKSTIVKQMKIIHEDGYSEEECRQYRAVVYSNTIQSIMAIVKAMGNLQIDFADPLRADDARQLFALSCTAEEQGMLPEDLSGVIRRLWADHGVQACFSRSREYQLNDSAAYYLNDLDRIAQSDYIPTQQDVLRTRVKTTGIVETHFTFKDLHFKMFDVGGQRSERKKWIHCFEGVTAIIFCVALSAYDLVLAEDEEMNRMHESMKLFDSICNNKWFTDTSIILFLNKKDLFEEKITHSPLTICFPEYTGANKYDEAASYIQSKFEDLNKRKDTKEIYTHFTCATDTKNVQFVFDAVTDVIIKNNLKDCGLF.

A lipid anchor (N-myristoyl glycine) is attached at Gly-2. The S-palmitoyl cysteine moiety is linked to residue Cys-3. The G-alpha domain occupies 32 to 355 (REVKLLLLGA…KNNLKDCGLF (324 aa)). Positions 35-48 (KLLLLGAGESGKST) are G1 motif. Residues 40–47 (GAGESGKS), 176–182 (LRTRVKT), 201–205 (DVGGQ), 270–273 (NKKD), and Ala-327 contribute to the GTP site. Mg(2+)-binding residues include Ser-47 and Thr-182. The interval 174 to 182 (DVLRTRVKT) is G2 motif. A G3 motif region spans residues 197–206 (FKMFDVGGQR). Positions 266-273 (ILFLNKKD) are G4 motif. The tract at residues 325–330 (TCATDT) is G5 motif.

The protein belongs to the G-alpha family. G(i/o/t/z) subfamily. As to quaternary structure, g proteins are composed of 3 units; alpha, beta and gamma. The alpha chain contains the guanine nucleotide binding site. In this context, interacts with GNB2. Interacts with UNC5B. Interacts with GPSM1. Interacts with RGS12 and RGS14. Interacts (inactive GDP-bound form) with NUCB1 (via GBA motif); the interaction leads to activation of GNAI3. Interacts (inactive GDP-bound form) with CCDC88C/DAPLE (via GBA motif). Interacts (inactive GDP-bound form) with CCDC8A/GIV (via GBA motif). Ubiquitously expressed. Most abundant in the lung and in the spleen.

Its subcellular location is the cytoplasm. The protein localises to the cytoskeleton. The protein resides in the microtubule organizing center. It is found in the centrosome. It localises to the cell membrane. Its subcellular location is the membrane. Guanine nucleotide-binding proteins (G proteins) are involved as modulators or transducers in various transmembrane signaling systems. The G(i) proteins are involved in hormonal regulation of adenylate cyclase: they inhibit the cyclase in response to beta-adrenergic stimuli. May play a role in cell division. This is Guanine nucleotide-binding protein G(i) subunit alpha-2 (GNAI2) from Cavia porcellus (Guinea pig).